The chain runs to 214 residues: Probable maleylacetoacetate isomerase (214 aa).

Residues 4–84 (QKPVLYSYWR…YLEETHPDVP (81 aa)) enclose the GST N-terminal domain. Glutathione-binding positions include 14–19 (SSCSWR), Val56, 68–69 (ES), Gln108, and 112–114 (NLK). Residues 89 to 212 (DPIKRAHARA…HPDNQPDTGL (124 aa)) enclose the GST C-terminal domain.

Belongs to the GST superfamily. Zeta family. Requires glutathione as cofactor.

It localises to the cytoplasm. The enzyme catalyses 4-maleylacetoacetate = 4-fumarylacetoacetate. It participates in amino-acid degradation; L-phenylalanine degradation; acetoacetate and fumarate from L-phenylalanine: step 5/6. In Caenorhabditis elegans, this protein is Probable maleylacetoacetate isomerase (gst-42).